Consider the following 1004-residue polypeptide: Translation initiation factor IF-2 (1004 aa).

The segment at 36–393 is disordered; the sequence is SSTIEPPVVK…RQKRNEYESM (358 aa). Low complexity-rich tracts occupy residues 62-157 and 173-183; these read AAKP…AKPA and AAKPGAEAPRP. Pro residues-rich tracts occupy residues 184–196 and 219–236; these read GGMPRPMGKPAPK and PRPGGGPRPGGGPRPGGG. Gly residues-rich tracts occupy residues 237–249 and 261–277; these read PRPQGQGRPGGQR and GNRGGQRQGAGAGGPRP. Residues 279–303 show a composition bias toward low complexity; it reads GGPRPQGGSRPQGGSAQGAQGAPSQ. The span at 330-373 shows a compositional bias: gly residues; the sequence is GKGGRGGQAGGGAGGGFNRGGGTGGGAGRGGRRGGTAGAFGRPG. Basic residues predominate over residues 377–386; sequence RRGRKSKRQK. In terms of domain architecture, tr-type G spans 499–671; it reads KRPPVVTVMG…VCLTADAELD (173 aa). The G1 stretch occupies residues 508-515; the sequence is GHVDHGKT. A GTP-binding site is contributed by 508 to 515; it reads GHVDHGKT. Residues 533–537 are G2; the sequence is GITQG. The G3 stretch occupies residues 558-561; it reads DTPG. GTP contacts are provided by residues 558–562 and 612–615; these read DTPGH and NKID. A G4 region spans residues 612–615; it reads NKID. The G5 stretch occupies residues 648-650; the sequence is SAK.

It belongs to the TRAFAC class translation factor GTPase superfamily. Classic translation factor GTPase family. IF-2 subfamily.

It localises to the cytoplasm. Functionally, one of the essential components for the initiation of protein synthesis. Protects formylmethionyl-tRNA from spontaneous hydrolysis and promotes its binding to the 30S ribosomal subunits. Also involved in the hydrolysis of GTP during the formation of the 70S ribosomal complex. The chain is Translation initiation factor IF-2 from Corynebacterium glutamicum (strain ATCC 13032 / DSM 20300 / JCM 1318 / BCRC 11384 / CCUG 27702 / LMG 3730 / NBRC 12168 / NCIMB 10025 / NRRL B-2784 / 534).